The following is a 795-amino-acid chain: Phenylalanine--tRNA ligase beta subunit (795 aa).

Residues 39–148 (AGAFHGVVVG…ADAPIGTDIR (110 aa)) form the tRNA-binding domain. Residues 401 to 476 (PTRATITLRR…RIYGYNNIPN (76 aa)) form the B5 domain. The Mg(2+) site is built by Asp454, Asp460, Glu463, and Glu464. One can recognise an FDX-ACB domain in the interval 701–794 (SRFPANRRDI…LKQRFQASLR (94 aa)).

It belongs to the phenylalanyl-tRNA synthetase beta subunit family. Type 1 subfamily. As to quaternary structure, tetramer of two alpha and two beta subunits. It depends on Mg(2+) as a cofactor.

It is found in the cytoplasm. The enzyme catalyses tRNA(Phe) + L-phenylalanine + ATP = L-phenylalanyl-tRNA(Phe) + AMP + diphosphate + H(+). In Pectobacterium atrosepticum (strain SCRI 1043 / ATCC BAA-672) (Erwinia carotovora subsp. atroseptica), this protein is Phenylalanine--tRNA ligase beta subunit.